A 51-amino-acid chain; its full sequence is Large ribosomal subunit protein eL39 (51 aa).

A disordered region spans residues 1-22 (MAAQKSFRIKQKMAKAKKQNRP). The span at 7–20 (FRIKQKMAKAKKQN) shows a compositional bias: basic residues.

The protein belongs to the eukaryotic ribosomal protein eL39 family. In terms of assembly, component of the large ribosomal subunit (LSU). Mature yeast ribosomes consist of a small (40S) and a large (60S) subunit. The 40S small subunit contains 1 molecule of ribosomal RNA (18S rRNA) and 33 different proteins (encoded by 57 genes). The large 60S subunit contains 3 rRNA molecules (25S, 5.8S and 5S rRNA) and 46 different proteins (encoded by 81 genes). eL39 interacts with YIH1.

It localises to the cytoplasm. Component of the ribosome, a large ribonucleoprotein complex responsible for the synthesis of proteins in the cell. The small ribosomal subunit (SSU) binds messenger RNAs (mRNAs) and translates the encoded message by selecting cognate aminoacyl-transfer RNA (tRNA) molecules. The large subunit (LSU) contains the ribosomal catalytic site termed the peptidyl transferase center (PTC), which catalyzes the formation of peptide bonds, thereby polymerizing the amino acids delivered by tRNAs into a polypeptide chain. The nascent polypeptides leave the ribosome through a tunnel in the LSU and interact with protein factors that function in enzymatic processing, targeting, and the membrane insertion of nascent chains at the exit of the ribosomal tunnel. The polypeptide is Large ribosomal subunit protein eL39 (Saccharomyces cerevisiae (strain ATCC 204508 / S288c) (Baker's yeast)).